The sequence spans 226 residues: UPF0173 metal-dependent hydrolase Dgeo_0136 (226 aa).

Belongs to the UPF0173 family.

The polypeptide is UPF0173 metal-dependent hydrolase Dgeo_0136 (Deinococcus geothermalis (strain DSM 11300 / CIP 105573 / AG-3a)).